We begin with the raw amino-acid sequence, 314 residues long: Methionyl-tRNA formyltransferase (314 aa).

111–114 (SLLP) contributes to the (6S)-5,6,7,8-tetrahydrofolate binding site.

Belongs to the Fmt family.

It carries out the reaction L-methionyl-tRNA(fMet) + (6R)-10-formyltetrahydrofolate = N-formyl-L-methionyl-tRNA(fMet) + (6S)-5,6,7,8-tetrahydrofolate + H(+). In terms of biological role, attaches a formyl group to the free amino group of methionyl-tRNA(fMet). The formyl group appears to play a dual role in the initiator identity of N-formylmethionyl-tRNA by promoting its recognition by IF2 and preventing the misappropriation of this tRNA by the elongation apparatus. The chain is Methionyl-tRNA formyltransferase from Coxiella burnetii (strain CbuG_Q212) (Coxiella burnetii (strain Q212)).